The primary structure comprises 131 residues: Binder of sperm protein homolog 2 (131 aa).

An N-terminal signal peptide occupies residues 1 to 22 (MEVMSHLVHWVFLAVYMYELNA). 2 consecutive Fibronectin type-II domains span residues 35-79 (ISTD…YCTA) and 80-128 (QDPP…QCSP). 4 disulfide bridges follow: C40–C64, C54–C77, C85–C111, and C99–C126.

Belongs to the seminal plasma protein family. Epididymis.

It is found in the secreted. Functionally, binds sperm in vitro but has no effect on sperm capacitation. Also binds gelatin and heparin, but not chondroitin sulfate B or phospholipid liposomes. This Mus musculus (Mouse) protein is Binder of sperm protein homolog 2.